The following is a 1240-amino-acid chain: ABC transporter B family member 15 (1240 aa).

The next 6 membrane-spanning stretches (helical) occupy residues 35–55, 82–102, 158–180, 184–206, 264–284, and 296–316; these read MGLG…VLLI, VALL…GYCW, LPNF…ILLW, IVGL…ALIS, GITI…SWYG, and GTVF…GGGL. One can recognise an ABC transmembrane type-1 1 domain in the interval 35–324; sequence MGLGLIGAVG…GLSNLKYFFE (290 aa). Residues 359-595 form the ABC transporter 1 domain; the sequence is VEFKNVKFVY…IDGQYSTLVH (237 aa). Residue 394 to 401 coordinates ATP; it reads GGSGSGKS. N-linked (GlcNAc...) asparagine glycosylation is found at Asn-542, Asn-605, and Asn-622. The interval 617–646 is disordered; sequence SKDIRNSSRVSTLSRSSSANSVTGPSTIKN. The span at 623-639 shows a compositional bias: low complexity; sequence SSRVSTLSRSSSANSVT. The N-linked (GlcNAc...) asparagine glycan is linked to Asn-646. The 289-residue stretch at 672–960 folds into the ABC transmembrane type-1 2 domain; sequence ALYGCISATL…AGSMTTDLAK (289 aa). 2 helical membrane passes run 681-701 and 714-734; these read LFGA…SVYF and IYAL…ISQH. Asn-769 carries N-linked (GlcNAc...) asparagine glycosylation. 4 helical membrane passes run 794–813, 817–839, 895–915, and 923–943; these read ALVV…GLVI, LALV…RVLL, SWFA…TWAL, and LIQD…ILVS. In terms of domain architecture, ABC transporter 2 spans 995 to 1233; that stretch reads VEFLDVDFSY…GPTGIYFSLV (239 aa). N-linked (GlcNAc...) asparagine glycosylation occurs at Asn-1015. 1030-1037 contributes to the ATP binding site; the sequence is GPSGSGKS.

The protein belongs to the ABC transporter superfamily. ABCB family. Multidrug resistance exporter (TC 3.A.1.201) subfamily.

It is found in the membrane. This is ABC transporter B family member 15 (ABCB15) from Arabidopsis thaliana (Mouse-ear cress).